The sequence spans 180 residues: Adenine phosphoribosyltransferase (180 aa).

This sequence belongs to the purine/pyrimidine phosphoribosyltransferase family. Homodimer.

The protein localises to the cytoplasm. It catalyses the reaction AMP + diphosphate = 5-phospho-alpha-D-ribose 1-diphosphate + adenine. Its pathway is purine metabolism; AMP biosynthesis via salvage pathway; AMP from adenine: step 1/1. In terms of biological role, catalyzes a salvage reaction resulting in the formation of AMP, that is energically less costly than de novo synthesis. This is Adenine phosphoribosyltransferase from Rhizobium johnstonii (strain DSM 114642 / LMG 32736 / 3841) (Rhizobium leguminosarum bv. viciae).